Here is a 116-residue protein sequence, read N- to C-terminus: Large ribosomal subunit protein bL20 (116 aa).

The protein belongs to the bacterial ribosomal protein bL20 family.

Its function is as follows. Binds directly to 23S ribosomal RNA and is necessary for the in vitro assembly process of the 50S ribosomal subunit. It is not involved in the protein synthesizing functions of that subunit. The chain is Large ribosomal subunit protein bL20 from Desulfatibacillum aliphaticivorans.